A 212-amino-acid chain; its full sequence is Pyrrolidone-carboxylate peptidase (212 aa).

Catalysis depends on residues E80, C143, and H165.

Belongs to the peptidase C15 family. Homotetramer.

The protein localises to the cytoplasm. It carries out the reaction Release of an N-terminal pyroglutamyl group from a polypeptide, the second amino acid generally not being Pro.. Removes 5-oxoproline from various penultimate amino acid residues except L-proline. The sequence is that of Pyrrolidone-carboxylate peptidase from Vibrio parahaemolyticus serotype O3:K6 (strain RIMD 2210633).